A 554-amino-acid polypeptide reads, in one-letter code: Calcium-dependent protein kinase 3 (554 aa).

Residues 30–55 (KKKSSNKSIKSQHKFEGSKIANKNNE) are disordered. The 256-residue stretch at 110-365 (NLSEEPLGKG…ASEALKHPWF (256 aa)) folds into the Protein kinase domain. ATP is bound by residues 116–124 (LGKGTYGCV) and lysine 139. Aspartate 230 serves as the catalytic Proton acceptor. Positions 385–393 (NFKNYALLL) match the J domain autoinhibitory motif motif. Positions 385-420 (NFKNYALLLKLQKLAMTIIAQQSNDYDLQQLKTVFL) are j domain. Residues 394–403 (KLQKLAMTII) carry the J domain EF-hand interaction motif motif. EF-hand domains are found at residues 410-445 (YDLQQLKTVFLYLDEDGKGNITKNQLKKGLENSGLK), 448-479 (QNFDVLLDQIDSDGSGRIDYTEFLAAALDRKH), 480-515 (LSKKLIYCAFRVFDVDNDGEITTAELAHILYNGNKK), and 521-554 (KDVNQVKKMIQEVDKNNDGKIDFYEFCEMMKLKY). Residues aspartate 458, aspartate 460, serine 462, arginine 464, glutamate 469, aspartate 493, aspartate 495, aspartate 497, glutamate 499, glutamate 504, aspartate 534, asparagine 536, aspartate 538, lysine 540, and glutamate 545 each coordinate Ca(2+).

Belongs to the protein kinase superfamily. Ser/Thr protein kinase family. CDPK subfamily. It depends on Mg(2+) as a cofactor.

The protein localises to the cytoplasm. It carries out the reaction L-seryl-[protein] + ATP = O-phospho-L-seryl-[protein] + ADP + H(+). The enzyme catalyses L-threonyl-[protein] + ATP = O-phospho-L-threonyl-[protein] + ADP + H(+). Its activity is regulated as follows. Activated by calcium. Upon calcium binding to the EF-hand domain 2, the C-terminus of the junction domain (J domain) undergoes a conformational change which results in the dissociation of the pseudo-substrate inhibitory motif from the catalytic domain. This, in turn, may facilitate the autophosphorylation of the activation loop at Thr-271, which leads to the kinase activation. Functionally, calcium-dependent protein kinase which acts as a sensor and effector of intracellular Ca(2+) levels probably in part downstream of cGMP-activated PKG kinase. In the mosquito midgut, regulates the gliding motility of the ookinete which is essential for the ookinete to invade the midgut epithelium. However, another study showed that while required for ookinete invasion of the midgut epithelium, is not required for ookinete gliding motility. The chain is Calcium-dependent protein kinase 3 from Plasmodium berghei (strain Anka).